A 452-amino-acid polypeptide reads, in one-letter code: Phosphoglucosamine mutase (452 aa).

The active-site Phosphoserine intermediate is Ser-112. Mg(2+)-binding residues include Ser-112, Asp-251, Asp-253, and Asp-255. Residue Ser-112 is modified to Phosphoserine.

It belongs to the phosphohexose mutase family. Mg(2+) serves as cofactor. Activated by phosphorylation.

The catalysed reaction is alpha-D-glucosamine 1-phosphate = D-glucosamine 6-phosphate. Catalyzes the conversion of glucosamine-6-phosphate to glucosamine-1-phosphate. The chain is Phosphoglucosamine mutase from Bordetella pertussis (strain Tohama I / ATCC BAA-589 / NCTC 13251).